A 420-amino-acid chain; its full sequence is Fasciclin-like arabinogalactan protein 8 (420 aa).

The N-terminal stretch at 1-25 is a signal peptide; sequence MAASQTFSLLAFTFSLLAFASTVSS. FAS1 domains lie at 26 to 172 and 186 to 326; these read HNIT…DAPI and SLSN…DNVL. Residues Asn27, Asn128, Asn162, Asn189, and Asn273 are each glycosylated (N-linked (GlcNAc...) asparagine). Residues 335-394 form a disordered region; that stretch reads SKSPSPAPAPEPVTAPTPSPADAPSPTAASPPAPPTDESPESAPSDSPTGSANSKSANAA. Over residues 339–371 the composition is skewed to pro residues; the sequence is SPAPAPEPVTAPTPSPADAPSPTAASPPAPPTD. A lipid anchor (GPI-anchor amidated asparagine) is attached at Asn392. The propeptide at 393–420 is removed in mature form; that stretch reads AAVGVSTPSLFTALVTIAAIAVSVSLCS.

Belongs to the fasciclin-like AGP family. In terms of tissue distribution, expressed mainly in flowers and to a lesser extent in leaves and roots.

Its subcellular location is the cell membrane. Its function is as follows. May be a cell surface adhesion protein. The polypeptide is Fasciclin-like arabinogalactan protein 8 (FLA8) (Arabidopsis thaliana (Mouse-ear cress)).